The sequence spans 253 residues: tRNA pseudouridine synthase A (253 aa).

The active-site Nucleophile is D53. Y112 lines the substrate pocket.

The protein belongs to the tRNA pseudouridine synthase TruA family. In terms of assembly, homodimer.

It carries out the reaction uridine(38/39/40) in tRNA = pseudouridine(38/39/40) in tRNA. In terms of biological role, formation of pseudouridine at positions 38, 39 and 40 in the anticodon stem and loop of transfer RNAs. The protein is tRNA pseudouridine synthase A of Lactococcus lactis subsp. cremoris (strain SK11).